We begin with the raw amino-acid sequence, 364 residues long: Probable UDP-arabinopyranose mutase 1 (364 aa).

A DXD motif motif is present at residues Asp-110–Asp-112. A glycan (N-linked (Glc...) arginine) is linked at Arg-158.

This sequence belongs to the RGP family. As to quaternary structure, homopentamer or homohexamer. Requires Mn(2+) as cofactor. Mg(2+) serves as cofactor. Post-translationally, reversibly glycosylated by UDP-glucose, UDP-xylose and UDP-galactose.

Its subcellular location is the secreted. The protein localises to the cell wall. The protein resides in the cell junction. It is found in the plasmodesma. It localises to the golgi apparatus. It carries out the reaction UDP-beta-L-arabinofuranose = UDP-beta-L-arabinopyranose. Functionally, probable UDP-L-arabinose mutase involved in the biosynthesis of cell wall non-cellulosic polysaccharides. Was initially shown to possess an autoglycosylating activity which is dependent on the presence of UDP-glucose and manganese. This Zea mays (Maize) protein is Probable UDP-arabinopyranose mutase 1.